The primary structure comprises 381 residues: 1-deoxy-D-xylulose 5-phosphate reductoisomerase (381 aa).

Residues Thr10, Gly11, Ser12, Ile13, Asn38, and Asn121 each coordinate NADPH. Lys122 is a 1-deoxy-D-xylulose 5-phosphate binding site. Glu123 is a binding site for NADPH. Asp147 contributes to the Mn(2+) binding site. 4 residues coordinate 1-deoxy-D-xylulose 5-phosphate: Ser148, Glu149, Ser173, and His196. Residue Glu149 participates in Mn(2+) binding. Position 202 (Gly202) interacts with NADPH. 1-deoxy-D-xylulose 5-phosphate is bound by residues Ser209, Asn214, Lys215, and Glu218. Glu218 is a Mn(2+) binding site.

It belongs to the DXR family. It depends on Mg(2+) as a cofactor. Mn(2+) is required as a cofactor.

The catalysed reaction is 2-C-methyl-D-erythritol 4-phosphate + NADP(+) = 1-deoxy-D-xylulose 5-phosphate + NADPH + H(+). It functions in the pathway isoprenoid biosynthesis; isopentenyl diphosphate biosynthesis via DXP pathway; isopentenyl diphosphate from 1-deoxy-D-xylulose 5-phosphate: step 1/6. Catalyzes the NADPH-dependent rearrangement and reduction of 1-deoxy-D-xylulose-5-phosphate (DXP) to 2-C-methyl-D-erythritol 4-phosphate (MEP). This chain is 1-deoxy-D-xylulose 5-phosphate reductoisomerase, found in Alkaliphilus oremlandii (strain OhILAs) (Clostridium oremlandii (strain OhILAs)).